We begin with the raw amino-acid sequence, 347 residues long: Homoisocitrate dehydrogenase (347 aa).

68–70 (ITS) is an NADH binding site. Ser70 is a binding site for (2R,3S)-homoisocitrate. At Ser81 the chain carries Phosphoserine. The (2R,3S)-homoisocitrate site is built by Arg87, Arg97, Arg128, Tyr135, Lys181, and Asn183. Asn183 contacts NADH. Mg(2+) contacts are provided by Asp213, Asp237, and Asp241. Residues 270-274 (GSAPD) and Asn282 each bind NADH.

The protein belongs to the isocitrate and isopropylmalate dehydrogenases family. Mg(2+) serves as cofactor.

The enzyme catalyses (2R,3S)-homoisocitrate + NAD(+) = 2-oxoadipate + CO2 + NADH. The catalysed reaction is (2R,3S)-iso(homo)2citrate + NAD(+) = 2-oxoheptanedioate + CO2 + NADH. It carries out the reaction (2R,3S)-iso(homo)3citrate + NAD(+) = 2-oxosuberate + CO2 + NADH. Its pathway is organic acid metabolism; 2-oxosuberate biosynthesis. Functionally, catalyzes the NAD-dependent oxidation and decarboxylation of (2R,3S)-homoisocitrate, (2R,3S)-homo(2)-isocitrate and (2R,3S)-homo(3)-isocitrate, into 2-oxoadipate, 2-oxopimelate (2-oxoheptanedioate), and 2-oxosuberate, respectively. All these substrates are intermediates in the biosynthesis of biotin and of 7-mercaptoheptanoate, a moiety of coenzyme B in methanoarchaea. Is also able to produce 2-oxoazelate from (2R,3S)-homo(4)-isocitrate in vitro, but this substrate is probably not physiologically relevant. Is unable to use any isomer of isocitrate or isopropylmalate as a substrate, and NADP as an oxidant. This Methanocaldococcus jannaschii (strain ATCC 43067 / DSM 2661 / JAL-1 / JCM 10045 / NBRC 100440) (Methanococcus jannaschii) protein is Homoisocitrate dehydrogenase (aksF).